The chain runs to 184 residues: GTP cyclohydrolase 1 (184 aa).

Zn(2+) contacts are provided by C75, H78, and C146.

Belongs to the GTP cyclohydrolase I family. As to quaternary structure, homomer.

It carries out the reaction GTP + H2O = 7,8-dihydroneopterin 3'-triphosphate + formate + H(+). It functions in the pathway cofactor biosynthesis; 7,8-dihydroneopterin triphosphate biosynthesis; 7,8-dihydroneopterin triphosphate from GTP: step 1/1. The protein is GTP cyclohydrolase 1 of Teredinibacter turnerae (strain ATCC 39867 / T7901).